A 320-amino-acid chain; its full sequence is Probable cell division protein WhiA (320 aa).

Residues 282 to 315 (SLEELGRAARPQISKDAVAGRIRRLLQRAEKAEQ) constitute a DNA-binding region (H-T-H motif).

Belongs to the WhiA family.

In terms of biological role, involved in cell division and chromosome segregation. The chain is Probable cell division protein WhiA from Bifidobacterium animalis subsp. lactis (strain AD011).